The following is a 115-amino-acid chain: U3-lycotoxin-Ls1a (115 aa).

Positions 1-20 (MKFVLLFGVLLLTLFSYSSA) are cleaved as a signal peptide. The propeptide occupies 21 to 44 (EMLDDFDQADEDELLSLIEKEEAR). 4 cysteine pairs are disulfide-bonded: Cys48–Cys63, Cys55–Cys72, Cys62–Cys87, and Cys74–Cys85.

It belongs to the neurotoxin 19 (CSTX) family. 01 subfamily. As to expression, expressed by the venom gland.

It localises to the secreted. The sequence is that of U3-lycotoxin-Ls1a from Lycosa singoriensis (Wolf spider).